Here is a 320-residue protein sequence, read N- to C-terminus: Ferrochelatase (320 aa).

The Fe cation site is built by H194 and E275.

This sequence belongs to the ferrochelatase family. In terms of assembly, monomer.

The protein resides in the cytoplasm. It carries out the reaction heme b + 2 H(+) = protoporphyrin IX + Fe(2+). Its pathway is porphyrin-containing compound metabolism; protoheme biosynthesis; protoheme from protoporphyrin-IX: step 1/1. Functionally, catalyzes the ferrous insertion into protoporphyrin IX. This Escherichia coli O45:K1 (strain S88 / ExPEC) protein is Ferrochelatase.